A 337-amino-acid polypeptide reads, in one-letter code: DNA-directed RNA polymerase subunit alpha (337 aa).

Residues 1 to 233 form an alpha N-terminal domain (alpha-NTD) region; that stretch reads MIQKNWQELI…DQLSIFVNFE (233 aa). The alpha C-terminal domain (alpha-CTD) stretch occupies residues 249–337; the sequence is FNPALLKKVD…DLAKRYEDQY (89 aa).

The protein belongs to the RNA polymerase alpha chain family. As to quaternary structure, homodimer. The RNAP catalytic core consists of 2 alpha, 1 beta, 1 beta' and 1 omega subunit. When a sigma factor is associated with the core the holoenzyme is formed, which can initiate transcription.

It carries out the reaction RNA(n) + a ribonucleoside 5'-triphosphate = RNA(n+1) + diphosphate. Its function is as follows. DNA-dependent RNA polymerase catalyzes the transcription of DNA into RNA using the four ribonucleoside triphosphates as substrates. The protein is DNA-directed RNA polymerase subunit alpha of Brucella melitensis biotype 2 (strain ATCC 23457).